A 354-amino-acid chain; its full sequence is MDISNYVDNFYFDEKIASAFELGEVSTVDLLTLDITELERRTHCSQSELLQLIEQISLLLQPVRCSASKVTSKYLTTGDVKLDETLHGGIPVGQLTEICGESGSGKSQFCMQLCLMVQLPLSLGGMNKAAVFISTESGLETKRLFELARYLPERYPKADKKDIIIKNPGDRVYTILCPDLESQEHIIQYQLPILFNRDKIGLVILDSVASNYRAELRYNRSKSHFRDLDNIAKRGNQLGKLAMTLRTLAHQHEAAVVIANQVSDRIPRDYDAIGLFSLDYQSQWFSGWDDTDPNPKIPSLGLVWTNNISTRLALIKKTDSATNNSGRIFRVVYSPNSPRLDVRICIGSVGIYSC.

ATP is bound at residue 100–107; it reads GESGSGKS.

The protein belongs to the RecA family.

The protein localises to the nucleus. Its function is as follows. Involved in recombination DNA repair and in the repair of gamma-ray-induced damage. In Schizosaccharomyces pombe (strain 972 / ATCC 24843) (Fission yeast), this protein is DNA repair protein rhp57 (rhp57).